A 151-amino-acid chain; its full sequence is 3-dehydroquinate dehydratase 1 (151 aa).

Residue tyrosine 24 is the Proton acceptor of the active site. Substrate is bound by residues asparagine 75, histidine 81, and aspartate 88. Histidine 101 serves as the catalytic Proton donor. Substrate contacts are provided by residues 102–103 (IS) and arginine 112.

This sequence belongs to the type-II 3-dehydroquinase family. In terms of assembly, homododecamer.

The enzyme catalyses 3-dehydroquinate = 3-dehydroshikimate + H2O. Its pathway is metabolic intermediate biosynthesis; chorismate biosynthesis; chorismate from D-erythrose 4-phosphate and phosphoenolpyruvate: step 3/7. Its function is as follows. Catalyzes a trans-dehydration via an enolate intermediate. This is 3-dehydroquinate dehydratase 1 (aroQ1) from Corynebacterium efficiens (strain DSM 44549 / YS-314 / AJ 12310 / JCM 11189 / NBRC 100395).